Consider the following 658-residue polypeptide: L-type lectin-domain containing receptor kinase V.4 (658 aa).

The signal sequence occupies residues 1-25 (MSRTIGSRVIFLILALFCCTENSRG). Residues 26–248 (KLVMQGSAGF…RAMHYMLSWF (223 aa)) are legume-lectin like. The Extracellular segment spans residues 26 to 280 (KLVMQGSAGF…EKSLVYRIVL (255 aa)). N-linked (GlcNAc...) asparagine glycans are attached at residues Asn-66 and Asn-196. Residues 281–301 (VTSLALVLFVALVASALSIFF) traverse the membrane as a helical segment. Residues 302–658 (YRRHKKVKEV…LTEPFTSRGR (357 aa)) are Cytoplasmic-facing. The region spanning 334-592 (KGFKQLLGKG…LGVLCSHQAV (259 aa)) is the Protein kinase domain. ATP is bound by residues 340-348 (LGKGGFGQV) and Lys-363. Catalysis depends on Asp-460, which acts as the Proton acceptor.

In the C-terminal section; belongs to the protein kinase superfamily. Ser/Thr protein kinase family. It in the N-terminal section; belongs to the leguminous lectin family.

Its subcellular location is the cell membrane. The catalysed reaction is L-seryl-[protein] + ATP = O-phospho-L-seryl-[protein] + ADP + H(+). The enzyme catalyses L-threonyl-[protein] + ATP = O-phospho-L-threonyl-[protein] + ADP + H(+). Involved in resistance response to the pathogenic oomycetes Phytophthora infestans and Phytophthora capsici and to the pathogenic bacteria Pseudomonas syringae. This chain is L-type lectin-domain containing receptor kinase V.4, found in Arabidopsis thaliana (Mouse-ear cress).